The primary structure comprises 87 residues: Cytochrome c oxidase subunit 6B1 (87 aa).

Residues 28–74 (TRNCWQNYLDFHRCQKAMTTKGGNVSVCEWYQRVYQSLCPTSWVTDW) form the CHCH domain. The Cx9C motif motif lies at 31-41 (CWQNYLDFHRC). 2 disulfide bridges follow: cysteine 31–cysteine 66 and cysteine 41–cysteine 55. The Cx10C motif signature appears at 55 to 66 (CEWYQRVYQSLC).

The protein localises to the mitochondrion intermembrane space. Connects the two COX monomers into the physiological dimeric form. This chain is Cytochrome c oxidase subunit 6B1 (COX6B1), found in Macaca fascicularis (Crab-eating macaque).